Consider the following 185-residue polypeptide: MAFSYCSSSLFVSLLLVILFISPLSQRPSVKAENHLISEICPKTRNPSLCLQALESDPRSASKDLKGLGQFSIDIAQASAKQTSKIIASLTNQATDPKLKGRYETCSENYADAIDSLGQAKQFLTSGDYNSLNIYASAAFDGAGTCEDSFEGPPNIPTQLHQADLKLEDLCDIVLVISNLLPGSK.

The first 32 residues, 1–32, serve as a signal peptide directing secretion; the sequence is MAFSYCSSSLFVSLLLVILFISPLSQRPSVKA. 2 disulfides stabilise this stretch: cysteine 41/cysteine 50 and cysteine 106/cysteine 146. Lysine 185 is a propeptide.

The protein belongs to the PMEI family. In terms of tissue distribution, fruit.

The protein resides in the cytoplasm. Its function is as follows. Inhibits pectin methylesterase; may be involved in the regulation of fruit ripening. In Actinidia deliciosa (Kiwi), this protein is Pectinesterase inhibitor (PMEI).